Consider the following 343-residue polypeptide: Peptide methionine sulfoxide reductase msrA/msrB (343 aa).

The segment at 21–174 (KVIYLAGGCF…PNGYCHIDLK (154 aa)) is peptide methionine sulfoxide reductase A. The Cysteine sulfenic acid (-SOH) intermediate role is filled by C29. Residues 191–314 (DEVLKKKLTQ…NSASLRFIPL (124 aa)) form the MsrB domain. The Nucleophile role is filled by C303.

The protein in the N-terminal section; belongs to the MsrA Met sulfoxide reductase family. This sequence in the C-terminal section; belongs to the MsrB Met sulfoxide reductase family.

It carries out the reaction L-methionyl-[protein] + [thioredoxin]-disulfide + H2O = L-methionyl-(S)-S-oxide-[protein] + [thioredoxin]-dithiol. It catalyses the reaction [thioredoxin]-disulfide + L-methionine + H2O = L-methionine (S)-S-oxide + [thioredoxin]-dithiol. The enzyme catalyses L-methionyl-[protein] + [thioredoxin]-disulfide + H2O = L-methionyl-(R)-S-oxide-[protein] + [thioredoxin]-dithiol. Its function is as follows. Has an important function as a repair enzyme for proteins that have been inactivated by oxidation. Catalyzes the reversible oxidation-reduction of methionine sulfoxide in proteins to methionine. The sequence is that of Peptide methionine sulfoxide reductase msrA/msrB from Enterococcus faecalis (Streptococcus faecalis).